The sequence spans 90 residues: Keratin-associated protein 19-1 (90 aa).

The 26 X 2 AA repeats of G-[YCGS] stretch occupies residues 5–84; sequence GSYYGGLGYS…CCRPSYNGGY (80 aa).

Belongs to the KRTAP type 19 family. As to quaternary structure, interacts with hair keratins. As to expression, detected in the upper portion of the hair cortex.

In terms of biological role, in the hair cortex, hair keratin intermediate filaments are embedded in an interfilamentous matrix, consisting of hair keratin-associated proteins (KRTAP), which are essential for the formation of a rigid and resistant hair shaft through their extensive disulfide bond cross-linking with abundant cysteine residues of hair keratins. The matrix proteins include the high-sulfur and high-glycine-tyrosine keratins. This chain is Keratin-associated protein 19-1 (KRTAP19-1), found in Homo sapiens (Human).